The chain runs to 800 residues: Phenylalanine--tRNA ligase beta subunit (800 aa).

One can recognise a tRNA-binding domain in the interval 39-152; it reads AAGLSKIVVG…EDAVPGEEVF (114 aa). The 76-residue stretch at 405–480 folds into the B5 domain; that stretch reads TSDVEVSSTL…RIYGYDRLPT (76 aa). Mg(2+)-binding residues include Asp-458, Asp-464, Glu-467, and Glu-468. An FDX-ACB domain is found at 707-800; the sequence is TKFPAVSRDV…LEEKVNAEVR (94 aa).

Belongs to the phenylalanyl-tRNA synthetase beta subunit family. Type 1 subfamily. Tetramer of two alpha and two beta subunits. Requires Mg(2+) as cofactor.

It localises to the cytoplasm. The catalysed reaction is tRNA(Phe) + L-phenylalanine + ATP = L-phenylalanyl-tRNA(Phe) + AMP + diphosphate + H(+). This is Phenylalanine--tRNA ligase beta subunit from Streptococcus pneumoniae (strain ATCC BAA-255 / R6).